Here is a 194-residue protein sequence, read N- to C-terminus: Small ribosomal subunit protein uS4c (194 aa).

Residues 82 to 143 (MRLDNILFRL…KQRSKALIQD (62 aa)) enclose the S4 RNA-binding domain.

It belongs to the universal ribosomal protein uS4 family. Part of the 30S ribosomal subunit. Contacts protein S5. The interaction surface between S4 and S5 is involved in control of translational fidelity.

It localises to the plastid. The protein localises to the chloroplast. Functionally, one of the primary rRNA binding proteins, it binds directly to 16S rRNA where it nucleates assembly of the body of the 30S subunit. In terms of biological role, with S5 and S12 plays an important role in translational accuracy. The sequence is that of Small ribosomal subunit protein uS4c (rps4) from Bobartia gladiata (Sword rush-lily).